Reading from the N-terminus, the 320-residue chain is o-succinylbenzoate synthase (320 aa).

K133 serves as the catalytic Proton donor. 3 residues coordinate Mg(2+): D161, E190, and D213. The active-site Proton acceptor is K235.

Belongs to the mandelate racemase/muconate lactonizing enzyme family. MenC type 1 subfamily. The cofactor is a divalent metal cation.

The enzyme catalyses (1R,6R)-6-hydroxy-2-succinyl-cyclohexa-2,4-diene-1-carboxylate = 2-succinylbenzoate + H2O. Its pathway is quinol/quinone metabolism; 1,4-dihydroxy-2-naphthoate biosynthesis; 1,4-dihydroxy-2-naphthoate from chorismate: step 4/7. It participates in quinol/quinone metabolism; menaquinone biosynthesis. Converts 2-succinyl-6-hydroxy-2,4-cyclohexadiene-1-carboxylate (SHCHC) to 2-succinylbenzoate (OSB). The polypeptide is o-succinylbenzoate synthase (Salmonella agona (strain SL483)).